The chain runs to 153 residues: MPLLLSGRGFRRELESAGCMAVHAPLEGGAETRLLRRLRAAGYRTHLTSARGLGDPEVFLFQKHGVRPPHLGHQSVGRGAAVGEVHDVMPLLGEVFLGDKPVVLWLLEGQVLSRSELLSLCDLCRREPRLKIVVEMGGARSLRWQPMTQLLAA.

It belongs to the complex I NdhN subunit family. NDH-1 can be composed of about 15 different subunits; different subcomplexes with different compositions have been identified which probably have different functions.

It is found in the cellular thylakoid membrane. The catalysed reaction is a plastoquinone + NADH + (n+1) H(+)(in) = a plastoquinol + NAD(+) + n H(+)(out). It carries out the reaction a plastoquinone + NADPH + (n+1) H(+)(in) = a plastoquinol + NADP(+) + n H(+)(out). NDH-1 shuttles electrons from an unknown electron donor, via FMN and iron-sulfur (Fe-S) centers, to quinones in the respiratory and/or the photosynthetic chain. The immediate electron acceptor for the enzyme in this species is believed to be plastoquinone. Couples the redox reaction to proton translocation, and thus conserves the redox energy in a proton gradient. Cyanobacterial NDH-1 also plays a role in inorganic carbon-concentration. This Synechococcus sp. (strain WH7803) protein is NAD(P)H-quinone oxidoreductase subunit N.